Reading from the N-terminus, the 308-residue chain is Zinc finger CCCH domain-containing protein 15 (308 aa).

The tract at residues 1-21 is disordered; sequence MENKIAPFSYSGSSAGNSSSG. Residues 9-21 are compositionally biased toward low complexity; the sequence is SYSGSSAGNSSSG. Residues 56–91 adopt a coiled-coil conformation; the sequence is TRLHEASLEAEALRLENTELRSMNLRLKNELNSLIR. The interval 110–190 is disordered; it reads LSIGGNDADE…GTVTKPGTCG (81 aa). S111 carries the phosphoserine modification. Polar residues predominate over residues 148-164; sequence RSSLPKSISVRSNGYSK. 2 C3H1-type zinc fingers span residues 222–250 and 260–288; these read MTKT…HGIK and RYKT…HSLS.

Phosphorylated at Ser-111 by ASK7/BIN2 in the cytoplasm in the absence of brassinosteroids (BRs). As to expression, highly expressed in secondary cell wall-forming tissues and the xylem cells of roots. Expressed predominantly in inflorescence stems, flowers and siliques. Highly expressed in the basal portion of stems, where cells are undergoing secondary cell wall thickening. Highly expressed in meiocytes and tapetum from anthers.

The protein resides in the cytoplasm. It is found in the nucleus. Functions probably as a transcriptional factor that activates genes involved in secondary cell wall biosynthesis. Functions redudantly with C3H14 to regulate secondary cell wall formation. C3H14 and C3H15 have overlapping roles in the regulation of secondary cell wall formation and anther development. C3H14 may contribute more to secondary cell wall thickening while C3H15 could be more important in anther development. May regulate at both the transcriptional and post-transcriptional levels the expression of many genes involved in various biological processes, particularly those associated with cell wall metabolism and pollen development. Involved in the regulation of callose metabolism in male meiocytes, in integrity of newly formed microspores, and promotes male fertility. May be involved in the regulation of the callose synthesis genes CALS5 and CALS12, the potential degradation of callose walls-related genes A6 and MYB80, as well as other putative beta-1,3-glucanase genes. Negatively regulates cell elongation by inhibiting brassinosteroid (BR) signaling. Functions downstream of the BRI1 receptor as a negative regulator in the BR pathway. This is Zinc finger CCCH domain-containing protein 15 from Arabidopsis thaliana (Mouse-ear cress).